The chain runs to 429 residues: Glutamate-1-semialdehyde 2,1-aminomutase (429 aa).

K265 is modified (N6-(pyridoxal phosphate)lysine).

It belongs to the class-III pyridoxal-phosphate-dependent aminotransferase family. HemL subfamily. In terms of assembly, homodimer. The cofactor is pyridoxal 5'-phosphate.

It localises to the cytoplasm. It catalyses the reaction (S)-4-amino-5-oxopentanoate = 5-aminolevulinate. The protein operates within porphyrin-containing compound metabolism; protoporphyrin-IX biosynthesis; 5-aminolevulinate from L-glutamyl-tRNA(Glu): step 2/2. In Legionella pneumophila (strain Lens), this protein is Glutamate-1-semialdehyde 2,1-aminomutase.